Consider the following 459-residue polypeptide: Cysteine--tRNA ligase (459 aa).

Residue cysteine 28 coordinates Zn(2+). The 'HIGH' region motif lies at 30-40 (VTVYDLCHFGH). Cysteine 209, histidine 234, and glutamate 238 together coordinate Zn(2+). Positions 266 to 270 (KMSKS) match the 'KMSKS' region motif. Position 269 (lysine 269) interacts with ATP.

This sequence belongs to the class-I aminoacyl-tRNA synthetase family. In terms of assembly, monomer. Requires Zn(2+) as cofactor.

It is found in the cytoplasm. It carries out the reaction tRNA(Cys) + L-cysteine + ATP = L-cysteinyl-tRNA(Cys) + AMP + diphosphate. This Glaesserella parasuis serovar 5 (strain SH0165) (Haemophilus parasuis) protein is Cysteine--tRNA ligase.